The chain runs to 179 residues: Ribosome maturation factor RimM (179 aa).

Residues 100 to 176 (HGEYHLTELI…FILLTPPSGL (77 aa)) form the PRC barrel domain.

This sequence belongs to the RimM family. Binds ribosomal protein uS19.

It localises to the cytoplasm. Its function is as follows. An accessory protein needed during the final step in the assembly of 30S ribosomal subunit, possibly for assembly of the head region. Essential for efficient processing of 16S rRNA. May be needed both before and after RbfA during the maturation of 16S rRNA. It has affinity for free ribosomal 30S subunits but not for 70S ribosomes. The chain is Ribosome maturation factor RimM from Prochlorococcus marinus subsp. pastoris (strain CCMP1986 / NIES-2087 / MED4).